We begin with the raw amino-acid sequence, 22 residues long: 50 kDa cell wall protein (22 aa).

It localises to the secreted. The protein localises to the cell wall. The sequence is that of 50 kDa cell wall protein from Nicotiana tabacum (Common tobacco).